The chain runs to 75 residues: uncharacterized protein (75 aa).

A helical membrane pass occupies residues 12–32 (LKVFILFTGFTALFYYAMIWV).

Its subcellular location is the cell membrane. This is an uncharacterized protein from Bacillus subtilis (strain 168).